We begin with the raw amino-acid sequence, 252 residues long: Small ribosomal subunit protein uS3 (252 aa).

One can recognise a KH type-2 domain in the interval 39-111 (IRKLINNFAK…EVNLNVLEVK (73 aa)). The disordered stretch occupies residues 222–252 (KPFASQSSNTPNRRPRNFKGGNNNHVNAKKN). Residues 241–252 (GGNNNHVNAKKN) are compositionally biased toward polar residues.

The protein belongs to the universal ribosomal protein uS3 family. Part of the 30S ribosomal subunit. Forms a tight complex with proteins S10 and S14.

Binds the lower part of the 30S subunit head. Binds mRNA in the 70S ribosome, positioning it for translation. This chain is Small ribosomal subunit protein uS3, found in Phytoplasma sp. (strain STRAWB2).